The primary structure comprises 2089 residues: Mediator of DNA damage checkpoint protein 1 (2089 aa).

Residues 1 to 19 are compositionally biased toward acidic residues; that stretch reads MEDTQAIDWDVEEEEETEQ. The interval 1–22 is disordered; the sequence is MEDTQAIDWDVEEEEETEQSSE. The segment at 1-150 is interaction with CHEK2; it reads MEDTQAIDWD…SRGPLTVEET (150 aa). The tract at residues 2–220 is interaction with the MRN complex; sequence EDTQAIDWDV…PFAFNLNSDT (219 aa). Phosphothreonine; by ATM is present on Thr-4. Residues 54-105 enclose the FHA domain; that stretch reads NVVGRMPDCSVALPFPSISKQHAEIEILAWDKAPILRDCGSLNGTQILRPPK. Ser-108 is modified (phosphoserine). A required for nuclear localization (NLS1) region spans residues 145–568; it reads LTVEETPRVQ…PAKLLVVSLE (424 aa). Residue Thr-146 is modified to Phosphothreonine. Ser-168 is modified (phosphoserine; by CK2). Ser-176 is modified (phosphoserine). Disordered stretches follow at residues 185 to 248, 261 to 280, and 286 to 317; these read RTTS…AKQS, DQPLVKERDNDTKVKRGAGN, and GVILERSQPPGEDSDTDVDDDSRPPGRPAEVH. Phosphoserine; by CK2 is present on residues Ser-196 and Ser-218. Thr-220 carries the phosphothreonine; by CK2 modification. Residues 261-274 are compositionally biased toward basic and acidic residues; that stretch reads DQPLVKERDNDTKV. Ser-299 is subject to Phosphoserine; by CK2. The residue at position 301 (Thr-301) is a Phosphothreonine; by CK2. The span at 306 to 317 shows a compositional bias: basic and acidic residues; it reads DSRPPGRPAEVH. Ser-329 bears the Phosphoserine; by CK2 mark. At Thr-331 the chain carries Phosphothreonine; by CK2. Phosphoserine is present on Ser-372. Ser-376 is subject to Phosphoserine; by CK2. Thr-378 is modified (phosphothreonine; by CK2). 2 positions are modified to phosphoserine: Ser-394 and Ser-397. Ser-402 carries the phosphoserine; by CK2 modification. Thr-404 carries the post-translational modification Phosphothreonine; by CK2. The residue at position 411 (Ser-411) is a Phosphoserine. At Thr-449 the chain carries Phosphothreonine. Position 453 is a phosphoserine; by CK2 (Ser-453). A Phosphothreonine; by CK2 modification is found at Thr-455. A disordered region spans residues 482 to 515; it reads RAHSEKDQPPFGDSDDSVEADKSSPGIHLERSQA. Phosphoserine occurs at positions 485, 495, 498, 504, 505, and 513. Thr-523 carries the post-translational modification Phosphothreonine. Ser-590 carries the phosphoserine modification. Lys-616 is covalently cross-linked (Glycyl lysine isopeptide (Lys-Gly) (interchain with G-Cter in SUMO1); alternate). Lys-616 participates in a covalent cross-link: Glycyl lysine isopeptide (Lys-Gly) (interchain with G-Cter in SUMO2); alternate. Disordered stretches follow at residues 653-689 and 780-1887; these read DTLGESTQPQREGAQVPTGREREQHVGGTKDSEDNYG and SPPR…TKLN. A compositionally biased stretch (basic and acidic residues) spans 671–685; that stretch reads GREREQHVGGTKDSE. A phosphoserine mark is found at Ser-780 and Ser-793. Lys-812 is modified (N6-acetyllysine). 4 stretches are compositionally biased toward basic and acidic residues: residues 819-844, 851-862, 868-905, and 914-951; these read ETAERVGPERGPLERETEKLLPERQT, ELTKGKQDREQK, DTQRQESDKNGESASPERDRESLKVEIETSEEIQEKQV, and AFEREVERPVANRECDPAELEEKVPKVILERDTQRGEP. A phosphoserine mark is found at Ser-955 and Ser-998. Over residues 955-965 the composition is skewed to polar residues; the sequence is SQDQKGQASSP. A compositionally biased stretch (basic and acidic residues) spans 1016–1031; sequence KASRIRAAEKVSRGDQ. Ser-1033 is subject to Phosphoserine. Positions 1040 to 1051 are enriched in pro residues; that stretch reads PTVPEAPAPPQK. A phosphoserine mark is found at Ser-1068 and Ser-1086. Over residues 1103-1113 the composition is skewed to basic residues; the sequence is PKPKIRTRKSS. Positions 1129-1156 are enriched in polar residues; that stretch reads PSTSTAQPVTPKPTSQATRSRTNRSSVK. The tract at residues 1148–1610 is interaction with the PRKDC complex; that stretch reads SRTNRSSVKT…TNRSSVKTPE (463 aa). Phosphothreonine is present on Thr-1157. Over residues 1169–1187 the composition is skewed to polar residues; the sequence is QPSTSTDQPVTSEPTSQVT. Position 1198 is a phosphothreonine (Thr-1198). Residues 1210–1228 show a composition bias toward polar residues; that stretch reads QPSTSTDRPVTSEPTSQAT. Ser-1235 carries the phosphoserine modification. Phosphothreonine is present on Thr-1239. Residues 1251-1268 are compositionally biased toward polar residues; it reads QPSTSTDQPVTSEPTYQA. Phosphothreonine is present on residues Thr-1280 and Thr-1302. Low complexity-rich tracts occupy residues 1304–1318 and 1347–1359; these read KPTSRTTRSRTNMSS and TSRTTRSRTNMSS. Residues 1375 to 1391 show a composition bias toward polar residues; sequence PSTSTEQPVTPEPTSRA. Phosphoserine occurs at positions 1399 and 1400. Lys-1402 carries the post-translational modification N6-acetyllysine. Residue Thr-1403 is modified to Phosphothreonine. Lys-1413 is covalently cross-linked (Glycyl lysine isopeptide (Lys-Gly) (interchain with G-Cter in SUMO1); alternate). Lys-1413 participates in a covalent cross-link: Glycyl lysine isopeptide (Lys-Gly) (interchain with G-Cter in SUMO2); alternate. Polar residues-rich tracts occupy residues 1416-1444, 1456-1475, 1498-1514, and 1538-1555; these read PSTSTDQPVTPEPTSQATRGRTNRSSVKT, QPSTSTDQPVTPEPTSQATR, ASASTDQPVTSEPTSRT, and QPSTSTDQPVTPEPTSRA. 2 positions are modified to phosphothreonine: Thr-1425 and Thr-1466. Thr-1548 bears the Phosphothreonine mark. The residue at position 1564 (Ser-1564) is a Phosphoserine. A phosphothreonine mark is found at Thr-1567 and Thr-1589. The span at 1579 to 1596 shows a compositional bias: polar residues; it reads QPSTSRNQLVTPEPTSRA. Phosphoserine is present on Ser-1604. The residue at position 1608 (Thr-1608) is a Phosphothreonine. Over residues 1611 to 1620 the composition is skewed to pro residues; that stretch reads PVVPTAPEPH. Residues 1624–1636 show a composition bias toward polar residues; the sequence is STDQPVTPKLTSR. A phosphothreonine mark is found at Thr-1630, Thr-1664, and Thr-1671. Over residues 1678–1689 the composition is skewed to polar residues; that stretch reads GGQSKTLRSSTV. A Phosphoserine modification is found at Ser-1681. The residue at position 1697 (Thr-1697) is a Phosphothreonine. A compositionally biased stretch (polar residues) spans 1698 to 1719; that stretch reads PEFQSPVTTDQPISPEPITQPS. Residues 1698 to 2089 are required for nuclear localization (NLS2); that stretch reads PEFQSPVTTD…VLSPLEMSST (392 aa). Phosphoserine occurs at positions 1702 and 1711. Residue Lys-1740 forms a Glycyl lysine isopeptide (Lys-Gly) (interchain with G-Cter in SUMO2) linkage. Position 1775 is a phosphoserine (Ser-1775). A Glycyl lysine isopeptide (Lys-Gly) (interchain with G-Cter in SUMO2) cross-link involves residue Lys-1790. Thr-1800 bears the Phosphothreonine mark. Ser-1820 is modified (phosphoserine). The segment covering 1823–1836 has biased composition (polar residues); sequence HQKQPQRGEVSQKT. Lys-1840 participates in a covalent cross-link: Glycyl lysine isopeptide (Lys-Gly) (interchain with G-Cter in SUMO1); alternate. Lys-1840 participates in a covalent cross-link: Glycyl lysine isopeptide (Lys-Gly) (interchain with G-Cter in SUMO2); alternate. The span at 1847–1857 shows a compositional bias: basic and acidic residues; sequence AEKPGKEEDVV. Position 1858 is a phosphothreonine (Thr-1858). BRCT domains lie at 1892–1970 and 1991–2082; these read APKV…EYVV and RERR…FVLS. Omega-N-methylarginine is present on Arg-1943.

In terms of assembly, homodimer. Interacts with H2AX, which requires phosphorylation of H2AX on 'Ser-139'. Interacts with the MRN complex, composed of MRE11, RAD50, and NBN. Interacts with CHEK2, which requires ATM-mediated phosphorylation of 'Thr-68' within the FHA domain of CHEK2. Interacts constitutively with the BRCA1-BARD1 complex, SMC1A and TP53BP1. Interacts with ATM and FANCD2, and these interactions are reduced upon DNA damage. Also interacts with the PRKDC complex, composed of XRCC6/KU70, XRCC5/KU80 and PRKDC/XRCC7. This interaction may be required for PRKDC autophosphorylation, which is essential for DNA double strand break (DSB) repair. When phosphorylated by ATM, interacts with RNF8 (via FHA domain). Interacts with CEP164. When phosphorylated, interacts with APTX (via FHA-like domain). Interacts (when phosphorylated) with TOPBP1; promoting TOPBP1 localization to DNA damage sites during mitosis. Interacts (when phosphorylated) with NBN; promoting NBN and MRN complex localization to DNA damage sites. Post-translationally, phosphorylated upon exposure to ionizing radiation (IR), ultraviolet radiation (UV), and hydroxyurea (HU). Phosphorylation in response to IR requires ATM, NBN, and possibly CHEK2. Also phosphorylated during the G2/M phase of the cell cycle and during activation of the mitotic spindle checkpoint. Phosphorylation at Thr-4 by ATM stabilizes and enhances homodimerization via the FHA domain. Phosphorylated at Ser-168 and Ser-196 by CK2 in response to DNA damage during mitosis, promoting interaction with TOPBP1. Phosphorylated by CK2 in response to DNA damage, promoting interaction with NBN and recruitment of the MRN complex to DNA damage sites. In terms of processing, sumoylation at Lys-1840 by PIAS4 following DNA damage promotes ubiquitin-mediated degradation. Ubiquitinated by RNF4, leading to proteasomal degradation; undergoes 'Lys-48'-linked polyubiquitination. Highly expressed in testis.

Its subcellular location is the nucleus. The protein localises to the chromosome. Its function is as follows. Histone reader protein required for checkpoint-mediated cell cycle arrest in response to DNA damage within both the S phase and G2/M phases of the cell cycle. Specifically recognizes and binds histone H2AX phosphorylated at 'Ser-139', a marker of DNA damage, serving as a scaffold for the recruitment of DNA repair and signal transduction proteins to discrete foci of DNA damage sites. Also required for downstream events subsequent to the recruitment of these proteins. These include phosphorylation and activation of the ATM, CHEK1 and CHEK2 kinases, and stabilization of TP53/p53 and apoptosis. ATM and CHEK2 may also be activated independently by a parallel pathway mediated by TP53BP1. Required for chromosomal stability during mitosis by promoting recruitment of TOPBP1 to DNA double strand breaks (DSBs): TOPBP1 forms filamentous assemblies that bridge MDC1 and tether broken chromosomes during mitosis. Required for the repair of DSBs via homologous recombination by promoting recruitment of NBN component of the MRN complex to DSBs. In Homo sapiens (Human), this protein is Mediator of DNA damage checkpoint protein 1.